Here is a 101-residue protein sequence, read N- to C-terminus: Urease subunit beta (101 aa).

It belongs to the urease beta subunit family. As to quaternary structure, heterotrimer of UreA (gamma), UreB (beta) and UreC (alpha) subunits. Three heterotrimers associate to form the active enzyme.

The protein resides in the cytoplasm. It catalyses the reaction urea + 2 H2O + H(+) = hydrogencarbonate + 2 NH4(+). Its pathway is nitrogen metabolism; urea degradation; CO(2) and NH(3) from urea (urease route): step 1/1. In Rhizobium etli (strain CIAT 652), this protein is Urease subunit beta.